A 172-amino-acid chain; its full sequence is DCC family protein At1g52590, chloroplastic (172 aa).

A chloroplast-targeting transit peptide spans 1-25 (MAILIPASFGRLTITSRAQVRVRVS).

The protein belongs to the DCC thiol-disulfide oxidoreductase family.

It is found in the plastid. Its subcellular location is the chloroplast. This is DCC family protein At1g52590, chloroplastic from Arabidopsis thaliana (Mouse-ear cress).